A 166-amino-acid chain; its full sequence is Small ribosomal subunit protein bS18m (166 aa).

Residues 1 to 31 (MLGRRIFSPAPNRGFILCNLIQSNNSTRRGF) constitute a mitochondrion transit peptide. Residues 29-48 (RGFSDNRKFNERNSEASSNV) are disordered. The segment covering 30 to 42 (GFSDNRKFNERNS) has biased composition (basic and acidic residues).

The protein belongs to the bacterial ribosomal protein bS18 family. In terms of assembly, component of the mitochondrial small ribosomal subunit (mt-SSU). Mature yeast 74S mitochondrial ribosomes consist of a small (37S) and a large (54S) subunit. The 37S small subunit contains a 15S ribosomal RNA (15S mt-rRNA) and at least 32 different proteins. The 54S large subunit contains a 21S rRNA (21S mt-rRNA) and at least 45 different proteins.

It is found in the mitochondrion. In terms of biological role, component of the mitochondrial ribosome (mitoribosome), a dedicated translation machinery responsible for the synthesis of mitochondrial genome-encoded proteins, including at least some of the essential transmembrane subunits of the mitochondrial respiratory chain. The mitoribosomes are attached to the mitochondrial inner membrane and translation products are cotranslationally integrated into the membrane. The protein is Small ribosomal subunit protein bS18m (rsm18) of Schizosaccharomyces pombe (strain 972 / ATCC 24843) (Fission yeast).